A 282-amino-acid polypeptide reads, in one-letter code: MAGAGLIGIRRRIKSVTNIRKITKAMGLVSTAKLRKARLNLEINKKYYNEYKVILKDIINFIEDSNIYIDGNGSHKKLYVIFTSDSGLCGSFNINIINNVINEIKEDKENSLVIVIGQKGRMYLKKLGINTLAEYIEIPDVPTTKEARTIAKNIIKLYSSKEVGEVFLVYSEFYSPVKQQVLINKILPFTKENKSDNKYIEFNPPVTRFVDEILENYLKATILNCFSNSKASENGSRMTAMNGATDNANDLLDNLDLQFNRLRQSAITQEISEIVGGAEAQR.

The protein belongs to the ATPase gamma chain family. As to quaternary structure, F-type ATPases have 2 components, CF(1) - the catalytic core - and CF(0) - the membrane proton channel. CF(1) has five subunits: alpha(3), beta(3), gamma(1), delta(1), epsilon(1). CF(0) has three main subunits: a, b and c.

It is found in the cell membrane. Functionally, produces ATP from ADP in the presence of a proton gradient across the membrane. The gamma chain is believed to be important in regulating ATPase activity and the flow of protons through the CF(0) complex. This chain is ATP synthase gamma chain, found in Clostridium botulinum (strain Loch Maree / Type A3).